Here is a 505-residue protein sequence, read N- to C-terminus: Cytochrome c oxidase subunit 1 (505 aa).

The helical transmembrane segment at 14–34 threads the bilayer; sequence LLYLVFAFFGGLLGTSLSMLI. Glu-37 and Gly-42 together coordinate Ca(2+). Helical transmembrane passes span 55-75, 98-118, 143-163, 180-200, 229-249, and 261-281; these read VIIT…ALFG, NISF…TLVE, AILS…NMLV, LFVW…PVLA, LFWF…FGIV, and VFGL…GFIV. His-60 is a Fe(II)-heme a binding site. Cu cation-binding residues include His-235 and Tyr-239. A cross-link (1'-histidyl-3'-tyrosine (His-Tyr)) is located at residues 235 to 239; the sequence is HPEVY. Tyr-239 lines the O2 pocket. Cu cation-binding residues include His-284 and His-285. The next 2 helical transmembrane spans lie at 302–322 and 332–352; these read ATMI…ATIY and MWFA…GVVL. Mg(2+)-binding residues include His-362 and Asp-363. Heme a3 is bound at residue His-370. His-372 is a binding site for Fe(II)-heme a. A run of 3 helical transmembrane segments spans residues 374-394, 408-428, and 446-466; these read VLSM…GNLI, FWLL…LGLA, and AVSS…ATTF.

The protein belongs to the heme-copper respiratory oxidase family. In terms of assembly, component of the cytochrome c oxidase (complex IV, CIV), a multisubunit enzyme composed of a catalytic core of 3 subunits and several supernumerary subunits. The complex exists as a monomer or a dimer and forms supercomplexes (SCs) in the inner mitochondrial membrane with ubiquinol-cytochrome c oxidoreductase (cytochrome b-c1 complex, complex III, CIII). It depends on heme as a cofactor. Requires Cu cation as cofactor.

It is found in the mitochondrion inner membrane. The catalysed reaction is 4 Fe(II)-[cytochrome c] + O2 + 8 H(+)(in) = 4 Fe(III)-[cytochrome c] + 2 H2O + 4 H(+)(out). Its pathway is energy metabolism; oxidative phosphorylation. In terms of biological role, component of the cytochrome c oxidase, the last enzyme in the mitochondrial electron transport chain which drives oxidative phosphorylation. The respiratory chain contains 3 multisubunit complexes succinate dehydrogenase (complex II, CII), ubiquinol-cytochrome c oxidoreductase (cytochrome b-c1 complex, complex III, CIII) and cytochrome c oxidase (complex IV, CIV), that cooperate to transfer electrons derived from NADH and succinate to molecular oxygen, creating an electrochemical gradient over the inner membrane that drives transmembrane transport and the ATP synthase. Cytochrome c oxidase is the component of the respiratory chain that catalyzes the reduction of oxygen to water. Electrons originating from reduced cytochrome c in the intermembrane space (IMS) are transferred via the dinuclear copper A center (CU(A)) of subunit 2 and heme A of subunit 1 to the active site in subunit 1, a binuclear center (BNC) formed by heme A3 and copper B (CU(B)). The BNC reduces molecular oxygen to 2 water molecules using 4 electrons from cytochrome c in the IMS and 4 protons from the mitochondrial matrix. The polypeptide is Cytochrome c oxidase subunit 1 (COX1) (Chlamydomonas reinhardtii (Chlamydomonas smithii)).